The sequence spans 41 residues: MSNTTTGRIPLWFVGMVGGLAALGLLAIFFYGSYVGLGSSL.

The helical transmembrane segment at 9–29 threads the bilayer; the sequence is IPLWFVGMVGGLAALGLLAIF.

This sequence belongs to the PsbJ family. PSII is composed of 1 copy each of membrane proteins PsbA, PsbB, PsbC, PsbD, PsbE, PsbF, PsbH, PsbI, PsbJ, PsbK, PsbL, PsbM, PsbT, PsbX, PsbY, PsbZ, Psb30/Ycf12, at least 3 peripheral proteins of the oxygen-evolving complex and a large number of cofactors. It forms dimeric complexes.

The protein resides in the plastid. The protein localises to the chloroplast thylakoid membrane. Functionally, one of the components of the core complex of photosystem II (PSII). PSII is a light-driven water:plastoquinone oxidoreductase that uses light energy to abstract electrons from H(2)O, generating O(2) and a proton gradient subsequently used for ATP formation. It consists of a core antenna complex that captures photons, and an electron transfer chain that converts photonic excitation into a charge separation. In Ostreococcus tauri, this protein is Photosystem II reaction center protein J.